Reading from the N-terminus, the 90-residue chain is Phosphoribosyl-ATP pyrophosphatase (90 aa).

Belongs to the PRA-PH family.

It is found in the cytoplasm. The catalysed reaction is 1-(5-phospho-beta-D-ribosyl)-ATP + H2O = 1-(5-phospho-beta-D-ribosyl)-5'-AMP + diphosphate + H(+). It functions in the pathway amino-acid biosynthesis; L-histidine biosynthesis; L-histidine from 5-phospho-alpha-D-ribose 1-diphosphate: step 2/9. The polypeptide is Phosphoribosyl-ATP pyrophosphatase (Streptomyces avermitilis (strain ATCC 31267 / DSM 46492 / JCM 5070 / NBRC 14893 / NCIMB 12804 / NRRL 8165 / MA-4680)).